Reading from the N-terminus, the 73-residue chain is Small ribosomal subunit protein bS18 (73 aa).

This sequence belongs to the bacterial ribosomal protein bS18 family. Part of the 30S ribosomal subunit. Forms a tight heterodimer with protein bS6.

In terms of biological role, binds as a heterodimer with protein bS6 to the central domain of the 16S rRNA, where it helps stabilize the platform of the 30S subunit. In Coxiella burnetii (strain Dugway 5J108-111), this protein is Small ribosomal subunit protein bS18.